A 522-amino-acid polypeptide reads, in one-letter code: Putative ribose/galactose/methyl galactoside import ATP-binding protein (522 aa).

2 consecutive ABC transporter domains span residues 7–244 (LEMV…VGRE) and 254–498 (PKLG…TGQA). 39 to 46 (GENGAGKS) lines the ATP pocket.

It belongs to the ABC transporter superfamily. Carbohydrate importer 2 (CUT2) (TC 3.A.1.2) family.

It is found in the cell membrane. The enzyme catalyses D-ribose(out) + ATP + H2O = D-ribose(in) + ADP + phosphate + H(+). It carries out the reaction D-galactose(out) + ATP + H2O = D-galactose(in) + ADP + phosphate + H(+). In terms of biological role, part of an ABC transporter complex involved in carbohydrate import. Could be involved in ribose, galactose and/or methyl galactoside import. Responsible for energy coupling to the transport system. This Halalkalibacterium halodurans (strain ATCC BAA-125 / DSM 18197 / FERM 7344 / JCM 9153 / C-125) (Bacillus halodurans) protein is Putative ribose/galactose/methyl galactoside import ATP-binding protein.